Consider the following 465-residue polypeptide: Ribulose bisphosphate carboxylase large chain (465 aa).

Position 4 is an N6,N6,N6-trimethyllysine (K4). Substrate is bound by residues N113 and T163. Residue K165 is the Proton acceptor of the active site. Residue K167 coordinates substrate. Mg(2+) is bound by residues K191, D193, and E194. An N6-carboxylysine modification is found at K191. H284 serves as the catalytic Proton acceptor. Substrate is bound by residues R285, H317, and S369.

This sequence belongs to the RuBisCO large chain family. Type I subfamily. Heterohexadecamer of 8 large chains and 8 small chains; disulfide-linked. The disulfide link is formed within the large subunit homodimers. Requires Mg(2+) as cofactor. In terms of processing, the disulfide bond which can form in the large chain dimeric partners within the hexadecamer appears to be associated with oxidative stress and protein turnover.

The protein resides in the plastid. Its subcellular location is the chloroplast. It catalyses the reaction 2 (2R)-3-phosphoglycerate + 2 H(+) = D-ribulose 1,5-bisphosphate + CO2 + H2O. The enzyme catalyses D-ribulose 1,5-bisphosphate + O2 = 2-phosphoglycolate + (2R)-3-phosphoglycerate + 2 H(+). In terms of biological role, ruBisCO catalyzes two reactions: the carboxylation of D-ribulose 1,5-bisphosphate, the primary event in carbon dioxide fixation, as well as the oxidative fragmentation of the pentose substrate in the photorespiration process. Both reactions occur simultaneously and in competition at the same active site. This is Ribulose bisphosphate carboxylase large chain from Hamamelis mollis (Chinese witch hazel).